The sequence spans 158 residues: C-type lectin BfL-1 (158 aa).

Positions 1–21 are cleaved as a signal peptide; it reads MGHFTFIGLCLLAMFLSLSGA. Disulfide bonds link Cys26/Cys37, Cys54/Cys154, Cys61/Cys156, and Cys129/Cys146. Residues 33-155 form the C-type lectin domain; it reads KNGLCYKVFS…CAALRPFLCQ (123 aa). Residues Gln119, Asp121, and Glu127 each contribute to the Ca(2+) site. Positions 119–121 match the Galactose-binding motif; it reads QPD. N-linked (GlcNAc...) asparagine glycosylation is present at Asn134. Residues Asn142 and Asp143 each contribute to the Ca(2+) site.

The protein belongs to the true venom lectin family. In terms of assembly, homodimer; non-covalently linked. Expressed by the venom gland.

It localises to the secreted. Galactose-binding lectin which recognizes specific carbohydrate structures and agglutinates a variety of animal cells by binding to cell-surface glycoproteins and glycolipids. May be a calcium-dependent lectin. The polypeptide is C-type lectin BfL-1 (Bungarus fasciatus (Banded krait)).